A 752-amino-acid chain; its full sequence is Zinc finger protein 425 (752 aa).

The 72-residue stretch at 9 to 80 (VTFDDVALYF…EQGCLDKTRR (72 aa)) folds into the KRAB domain. 19 consecutive C2H2-type zinc fingers follow at residues 190-212 (YSCY…KRSH), 246-268 (FQCS…QVVH), 274-296 (YPCP…LCLH), 302-324 (FCCG…LRLH), 330-352 (FQCP…LTQH), 358-380 (FHCP…QRTH), 386-408 (FSCG…IRVH), 414-436 (FSCP…GLQH), 442-464 (FQCP…QRLH), 470-492 (FPCA…TRVH), 498-520 (FPCG…LKVH), 526-548 (FSCA…TRLH), 554-576 (FQCP…QRMH), 582-604 (FACG…LRLH), 610-632 (YQCP…LLQH), 638-660 (FSCV…IRVH), 666-688 (FQCP…LYKH), 694-716 (FQCP…LCLH), and 722-744 (FSCD…IAVH).

The protein belongs to the krueppel C2H2-type zinc-finger protein family.

It is found in the nucleus. Its subcellular location is the cytoplasm. Acts as a transcriptional repressor. In Homo sapiens (Human), this protein is Zinc finger protein 425 (ZNF425).